A 512-amino-acid chain; its full sequence is ETS translocation variant 3 (512 aa).

The ETS DNA-binding region spans 35-116 (IQLWHFILEL…KGKRFTYKFN (82 aa)). The disordered stretch occupies residues 136–222 (VPQSAPPVPT…NAIGGGGIGH (87 aa)). Phosphoserine is present on residues Ser-139, Ser-159, and Ser-315. Polar residues predominate over residues 158–184 (HSPTNDVQPGRFSASSLTASGQESSNG). The disordered stretch occupies residues 336–512 (PEESTQFSIK…QGLATAAADA (177 aa)). Composition is skewed to basic and acidic residues over residues 380–406 (IKVE…HTQE), 453–468 (DRPG…KEDA), and 479–491 (RWND…ELSK). Lys-381 participates in a covalent cross-link: Glycyl lysine isopeptide (Lys-Gly) (interchain with G-Cter in SUMO2). At Lys-388 the chain carries N6-acetyllysine; alternate. Lys-388 participates in a covalent cross-link: Glycyl lysine isopeptide (Lys-Gly) (interchain with G-Cter in SUMO2); alternate.

Belongs to the ETS family.

The protein localises to the nucleus. Functionally, transcriptional repressor that contribute to growth arrest during terminal macrophage differentiation by repressing target genes involved in Ras-dependent proliferation. Represses MMP1 promoter activity. This is ETS translocation variant 3 (ETV3) from Homo sapiens (Human).